A 1226-amino-acid polypeptide reads, in one-letter code: DNA-directed RNA polymerase subunit beta'' (1226 aa).

Residues cysteine 223, cysteine 297, cysteine 304, and cysteine 307 each coordinate Zn(2+).

It belongs to the RNA polymerase beta' chain family. RpoC2 subfamily. In plastids the minimal PEP RNA polymerase catalytic core is composed of four subunits: alpha, beta, beta', and beta''. When a (nuclear-encoded) sigma factor is associated with the core the holoenzyme is formed, which can initiate transcription. It depends on Zn(2+) as a cofactor.

The protein resides in the plastid. Its subcellular location is the chloroplast. It catalyses the reaction RNA(n) + a ribonucleoside 5'-triphosphate = RNA(n+1) + diphosphate. In terms of biological role, DNA-dependent RNA polymerase catalyzes the transcription of DNA into RNA using the four ribonucleoside triphosphates as substrates. In Pyropia yezoensis (Susabi-nori), this protein is DNA-directed RNA polymerase subunit beta''.